Reading from the N-terminus, the 213-residue chain is Histidine biosynthesis bifunctional protein HisIE (213 aa).

Residues 1–114 form a phosphoribosyl-AMP cyclohydrolase region; that stretch reads MLTTEKYQGL…FHPALTDFSF (114 aa). A phosphoribosyl-ATP pyrophosphohydrolase region spans residues 115–213; sequence LFQLENIISI…RVRSKLKKKH (99 aa).

In the N-terminal section; belongs to the PRA-CH family. The protein in the C-terminal section; belongs to the PRA-PH family.

The protein localises to the cytoplasm. The catalysed reaction is 1-(5-phospho-beta-D-ribosyl)-ATP + H2O = 1-(5-phospho-beta-D-ribosyl)-5'-AMP + diphosphate + H(+). It catalyses the reaction 1-(5-phospho-beta-D-ribosyl)-5'-AMP + H2O = 1-(5-phospho-beta-D-ribosyl)-5-[(5-phospho-beta-D-ribosylamino)methylideneamino]imidazole-4-carboxamide. Its pathway is amino-acid biosynthesis; L-histidine biosynthesis; L-histidine from 5-phospho-alpha-D-ribose 1-diphosphate: step 2/9. The protein operates within amino-acid biosynthesis; L-histidine biosynthesis; L-histidine from 5-phospho-alpha-D-ribose 1-diphosphate: step 3/9. The polypeptide is Histidine biosynthesis bifunctional protein HisIE (Blochmanniella floridana).